The sequence spans 660 residues: MFQQLTYRLRLFRRRHKYIFINSIFLSVIIIFLIYSYWSNLPAEDNSAIINEKGTYHRSLWESITMALFPPKTKPFEEKKPQVNPNNNQEVGVESGASEISQHKQQQQQQQHAKEPTTKTSSKSLVSDEAYQLNLKLINEQQEKYNRLHPFEQKRLQQGYEFFDNIFKIFYQAKPSVSQLNTYPSKKRIYHARFDSLADDDTIFSEKYLSQFLQLSNEELAAMKKSHKYVVENLPEDAPDGLYKKNGIVYVAGGSFNWLTLLSIKSLRAVGCHLPIEVFIPKIEEYESDLCNRILPELDARCIYMKNQLMNPNKDNSDSFANKFEFKGYQYKALAILLSSFENVLLLDSDNIPAHSPEELFENDPFKSYGLVVWPDYWKRATSPYYYNIADIDVSEKYLGSKYNEVEGQYTDLSVEKGSVELDKIPLHQRLGSIPDPTSESGQLLISKKTHLKPLLLALYYNLYGPSHYYPLFSQGSDGEGDKETFLAATVTLGKRYYQVAKFLVSLGHFKVPGGDFEGCGMGQFDPQQDLEYIKLREQYAKIPEKDKEKQHKFKLQHQVLEKGPEILFVHANFPKLNPWKLKQEKKIFDAKGNRVRLYGPGMIKRIGYDFEWFQWEGMKYLLCIYDVNLQIFQDVKKSDLCDEILEHLRFLESTQNITD.

Over 1-17 the chain is Cytoplasmic; the sequence is MFQQLTYRLRLFRRRHK. A helical transmembrane segment spans residues 18–38; the sequence is YIFINSIFLSVIIIFLIYSYW. At 39-660 the chain is on the extracellular side; it reads SNLPAEDNSA…FLESTQNITD (622 aa). A disordered region spans residues 75 to 125; the sequence is PFEEKKPQVNPNNNQEVGVESGASEISQHKQQQQQQQHAKEPTTKTSSKSL. An N-linked (GlcNAc...) asparagine glycan is attached at N657.

This sequence belongs to the MNN1/MNT family.

The protein localises to the golgi apparatus membrane. Its pathway is protein modification; protein glycosylation. Functionally, alpha-1,2-mannosyltransferase required for cell wall integrity. Responsible for addition of the first alpha-1,2-linked mannose to form the branches on the mannan backbone of oligosaccharides. Addition of alpha-1,2-mannose is required for stabilization of the alpha-1,6-mannose backbone and hence regulates mannan fibril length; and is important for both immune recognition and virulence. This is Alpha-1,2-mannosyltransferase MNN21 (MNN21) from Candida albicans (strain SC5314 / ATCC MYA-2876) (Yeast).